A 971-amino-acid polypeptide reads, in one-letter code: Reversion-inducing cysteine-rich protein with Kazal motifs (971 aa).

The first 22 residues, 1 to 22, serve as a signal peptide directing secretion; it reads MATVRASLRGALLLLLAVAGVA. A Knot 1 repeat occupies 37 to 84; it reads CCNHSKDNQMCRDVCEQIFSSKSESRLKHLLQRAPDYCPETMVEIWNC. Residues 37-338 form a 5 X Knot repeats region; the sequence is CCNHSKDNQM…NPVEVSMLTC (302 aa). 2 N-linked (GlcNAc...) asparagine glycosylation sites follow: N39 and N86. Knot repeat units lie at residues 104-141 and 151-197; these read CCELAIALECRQACKQASSKNDISKVCRKEYENALFSC and CCSY…LIHC. Residue N200 is glycosylated (N-linked (GlcNAc...) asparagine). Knot repeat units lie at residues 216 to 263 and 292 to 338; these read CCDR…LWQC and CCSK…MLTC. N297 and N352 each carry an N-linked (GlcNAc...) asparagine glycan. 3 Kazal-like domains span residues 627 to 673, 698 to 752, and 753 to 789; these read TFTG…SCMS, TFDK…PCQP, and FCRATEPVCGHNGETYSSVCAAYSDRVAVDYYGDCQA. 6 disulfide bridges follow: C633/C658, C635/C654, C643/C671, C716/C735, C724/C750, and C761/C787. The GPI-anchor amidated serine moiety is linked to residue S942. Residues 943-971 constitute a propeptide, removed in mature form; that stretch reads AGVRARPSCHSLLLPLSLGLALHLLWTYN.

Belongs to the RECK family. In terms of assembly, interacts (via knot repeats) with WNT7A (via disordered linker region); the interaction is direct. Interacts (via knot repeats) with WNT7B (via disordered linker region); the interaction is direct. Interacts with ADGRA2; the interaction is direct. Interacts with MMP9. In terms of processing, N-glycosylated. In terms of tissue distribution, expressed in various tissues and untransformed cells. It is undetectable in tumor-derived cell lines and oncogenically transformed cells.

The protein localises to the cell membrane. Functionally, functions together with ADGRA2 to enable brain endothelial cells to selectively respond to Wnt7 signals (WNT7A or WNT7B). Plays a key role in Wnt7-specific responses: required for central nervous system (CNS) angiogenesis and blood-brain barrier regulation. Acts as a Wnt7-specific coactivator of canonical Wnt signaling by decoding Wnt ligands: acts by interacting specifically with the disordered linker region of Wnt7, thereby conferring ligand selectivity for Wnt7. ADGRA2 is then required to deliver RECK-bound Wnt7 to frizzled by assembling a higher-order RECK-ADGRA2-Fzd-LRP5-LRP6 complex. Also acts as a serine protease inhibitor: negatively regulates matrix metalloproteinase-9 (MMP9) by suppressing MMP9 secretion and by direct inhibition of its enzymatic activity. Also inhibits metalloproteinase activity of MMP2 and MMP14 (MT1-MMP). The sequence is that of Reversion-inducing cysteine-rich protein with Kazal motifs from Homo sapiens (Human).